The primary structure comprises 729 residues: Fatty acid oxidation complex subunit alpha (729 aa).

The enoyl-CoA hydratase/isomerase stretch occupies residues M1 to K189. D296 is a substrate binding site. The interval E311 to A729 is 3-hydroxyacyl-CoA dehydrogenase. NAD(+) is bound by residues M324, D343, V400–E402, K407, and S429. The For 3-hydroxyacyl-CoA dehydrogenase activity role is filled by H450. Residue N453 participates in NAD(+) binding. N500 and Y660 together coordinate substrate. The interval R708–A729 is disordered.

It in the N-terminal section; belongs to the enoyl-CoA hydratase/isomerase family. In the C-terminal section; belongs to the 3-hydroxyacyl-CoA dehydrogenase family. Heterotetramer of two alpha chains (FadB) and two beta chains (FadA).

It carries out the reaction a (3S)-3-hydroxyacyl-CoA + NAD(+) = a 3-oxoacyl-CoA + NADH + H(+). The catalysed reaction is a (3S)-3-hydroxyacyl-CoA = a (2E)-enoyl-CoA + H2O. The enzyme catalyses a 4-saturated-(3S)-3-hydroxyacyl-CoA = a (3E)-enoyl-CoA + H2O. It catalyses the reaction (3S)-3-hydroxybutanoyl-CoA = (3R)-3-hydroxybutanoyl-CoA. It carries out the reaction a (3Z)-enoyl-CoA = a 4-saturated (2E)-enoyl-CoA. The catalysed reaction is a (3E)-enoyl-CoA = a 4-saturated (2E)-enoyl-CoA. It participates in lipid metabolism; fatty acid beta-oxidation. Functionally, involved in the aerobic and anaerobic degradation of long-chain fatty acids via beta-oxidation cycle. Catalyzes the formation of 3-oxoacyl-CoA from enoyl-CoA via L-3-hydroxyacyl-CoA. It can also use D-3-hydroxyacyl-CoA and cis-3-enoyl-CoA as substrate. The polypeptide is Fatty acid oxidation complex subunit alpha (Citrobacter koseri (strain ATCC BAA-895 / CDC 4225-83 / SGSC4696)).